A 669-amino-acid chain; its full sequence is Dymeclin (669 aa).

Glycine 2 carries N-myristoyl glycine lipidation.

It belongs to the dymeclin family. Post-translationally, myristoylated in vitro; myristoylation is not essential for protein targeting to Golgi compartment.

It localises to the cytoplasm. Its subcellular location is the golgi apparatus. Its function is as follows. Necessary for correct organization of Golgi apparatus. The chain is Dymeclin (dym) from Xenopus laevis (African clawed frog).